Reading from the N-terminus, the 500-residue chain is Glycerol kinase (500 aa).

Threonine 16 is a binding site for ADP. Threonine 16 and threonine 17 together coordinate ATP. Threonine 16 is a sn-glycerol 3-phosphate binding site. Arginine 20 is a binding site for ADP. Sn-glycerol 3-phosphate is bound by residues arginine 86, glutamate 87, tyrosine 138, and aspartate 243. Residues arginine 86, glutamate 87, tyrosine 138, aspartate 243, and glutamine 244 each coordinate glycerol. Residues threonine 265 and glycine 313 each contribute to the ADP site. ATP is bound by residues threonine 265, glycine 313, glutamine 317, and glycine 414. 2 residues coordinate ADP: glycine 414 and asparagine 418.

It belongs to the FGGY kinase family.

The enzyme catalyses glycerol + ATP = sn-glycerol 3-phosphate + ADP + H(+). It functions in the pathway polyol metabolism; glycerol degradation via glycerol kinase pathway; sn-glycerol 3-phosphate from glycerol: step 1/1. With respect to regulation, inhibited by fructose 1,6-bisphosphate (FBP). Key enzyme in the regulation of glycerol uptake and metabolism. Catalyzes the phosphorylation of glycerol to yield sn-glycerol 3-phosphate. The chain is Glycerol kinase from Nostoc sp. (strain PCC 7120 / SAG 25.82 / UTEX 2576).